Here is a 139-residue protein sequence, read N- to C-terminus: uncharacterized protein (139 aa).

The 132-residue stretch at 8-139 folds into the HTH marR-type domain; it reads ANLLDHALTK…FLAIIAKLAQ (132 aa). A DNA-binding region (H-T-H motif) is located at residues 53–76; that stretch reads IKDILKEVTLSPSATTTALNHLEQ.

This is an uncharacterized protein from Bacillus subtilis (strain 168).